The following is a 433-amino-acid chain: Transcobalamin-1 (433 aa).

A signal peptide spans 1–23 (MRQSHQLPLVGLLLFSFIPSQLC). Residues 24–310 (EICEVSEENY…DINKDSSCVS (287 aa)) are globular N-terminal alpha domain. Disulfide bonds link cysteine 26-cysteine 265, cysteine 105-cysteine 308, and cysteine 155-cysteine 197. 142–146 (TNYYQ) contacts cyanocob(III)alamin. The N-linked (GlcNAc...) asparagine glycan is linked to asparagine 160. Aspartate 186 is a binding site for cyanocob(III)alamin. Asparagine 216 carries N-linked (GlcNAc...) asparagine glycosylation. Cyanocob(III)alamin is bound by residues asparagine 240 and glutamine 289. Residues 311 to 332 (ASGNFNISADEPITVTPPDSQS) form a flexible linker region. Residues asparagine 316, asparagine 337, asparagine 343, asparagine 349, asparagine 354, and asparagine 369 are each glycosylated (N-linked (GlcNAc...) asparagine). The interval 333–433 (YISVNYSVRI…ENLEVRWSKY (101 aa)) is globular C-terminal beta domain. Residue 385-386 (YI) coordinates cyanocob(III)alamin. Cysteine 388 and cysteine 393 are disulfide-bonded. Cyanocob(III)alamin-binding positions include 402-404 (WEL), leucine 411, and tyrosine 433.

It belongs to the eukaryotic cobalamin transport proteins family. Post-translationally, contains about 30% carbohydrates. As to expression, produced by the salivary glands of the oral cavity, in response to ingestion of food. Major constituent of secondary granules in neutrophils.

The protein localises to the secreted. Functionally, binds vitamin B12 with femtomolar affinity and protects it from the acidic environment of the stomach. The chain is Transcobalamin-1 (TCN1) from Homo sapiens (Human).